We begin with the raw amino-acid sequence, 591 residues long: 2-succinyl-5-enolpyruvyl-6-hydroxy-3-cyclohexene-1-carboxylate synthase (591 aa).

This sequence belongs to the TPP enzyme family. MenD subfamily. Homodimer. The cofactor is Mg(2+). Requires Mn(2+) as cofactor. Thiamine diphosphate is required as a cofactor.

The enzyme catalyses isochorismate + 2-oxoglutarate + H(+) = 5-enolpyruvoyl-6-hydroxy-2-succinyl-cyclohex-3-ene-1-carboxylate + CO2. Its pathway is quinol/quinone metabolism; 1,4-dihydroxy-2-naphthoate biosynthesis; 1,4-dihydroxy-2-naphthoate from chorismate: step 2/7. The protein operates within quinol/quinone metabolism; menaquinone biosynthesis. Its function is as follows. Catalyzes the thiamine diphosphate-dependent decarboxylation of 2-oxoglutarate and the subsequent addition of the resulting succinic semialdehyde-thiamine pyrophosphate anion to isochorismate to yield 2-succinyl-5-enolpyruvyl-6-hydroxy-3-cyclohexene-1-carboxylate (SEPHCHC). The protein is 2-succinyl-5-enolpyruvyl-6-hydroxy-3-cyclohexene-1-carboxylate synthase of Salinibacter ruber (strain DSM 13855 / M31).